The chain runs to 256 residues: Putative cysteine-rich repeat secretory protein 21 (256 aa).

Residues 1–30 form the signal peptide; that stretch reads MYSSVSKRLVSVHILVVVALQLLFIPNVLS. Gnk2-homologous domains lie at 37 to 139 and 145 to 253; these read YLHH…SIDT and YQNN…LYPF.

Belongs to the cysteine-rich repeat secretory protein family.

It is found in the secreted. The chain is Putative cysteine-rich repeat secretory protein 21 (CRRSP21) from Arabidopsis thaliana (Mouse-ear cress).